Here is a 104-residue protein sequence, read N- to C-terminus: MGDVMIQSVKTESGLVEGHRGICDSLGRVVGALAKVAKLVVALAALVLNGALCVLSLVALCVGATPVGPLAVLVATTLASFLCAACVLFIAAKDRGWIASTNKC.

2 helical membrane passes run 39–59 (LVVALAALVLNGALCVLSLVA) and 70–90 (LAVLVATTLASFLCAACVLFI).

The protein localises to the secreted. The protein resides in the host vacuole. It is found in the host pathogen-containing vacuole. It localises to the host pathogen-containing vacuole membrane. Functionally, inclusion membrane protein probably involved in early modification events of the chlamydial inclusion. The sequence is that of Inclusion membrane protein F (incF) from Chlamydia trachomatis serovar D (strain ATCC VR-885 / DSM 19411 / UW-3/Cx).